We begin with the raw amino-acid sequence, 492 residues long: Spore germination protein XA (492 aa).

7 helical membrane passes run 246–266, 285–305, 325–345, 353–373, 377–397, 413–433, and 442–462; these read FILL…FPFF, LLSL…VALV, EGIP…FELL, PAAF…QAAI, FVSP…FTLV, FLMS…LIVI, and GLPF…PSTF.

It belongs to the GerABKA family.

The protein localises to the cell membrane. Functionally, may allow B.anthracis to germinate within phagocytic cells and therefore involved in virulence. This chain is Spore germination protein XA (gerXA), found in Bacillus anthracis.